The primary structure comprises 299 residues: Taste receptor type 2 member 42 (299 aa).

Residues 1–7 are Extracellular-facing; the sequence is MATELDK. The chain crosses the membrane as a helical span at residues 8–28; it reads IFLILAIAEFIISMLGNVFIG. Over 29 to 50 the chain is Cytoplasmic; it reads LVNCSEGIKNQKVFSSDFILTS. The helical transmembrane segment at 51-71 threads the bilayer; the sequence is LAISTIGQLLVILFDSFLVGL. Over 72–101 the chain is Extracellular; it reads ASHLYTTYRLGKPVIMLWHMTNHLTTWLAT. Residues 102–122 traverse the membrane as a helical segment; it reads CLSVFYFFKIAHFPHSLFLWL. At 123–127 the chain is on the cytoplasmic side; sequence RWRMN. A helical membrane pass occupies residues 128–148; the sequence is GMIAMLLILSLFLLIFDSSVL. Over 149–187 the chain is Extracellular; that stretch reads EIFIDISLNIIDKSSLTLYLDESKTLYDKLSILKTLLSL. A helical transmembrane segment spans residues 188–208; that stretch reads TSFIPFSLSLTSVLFLYLSLV. At 209–238 the chain is on the cytoplasmic side; it reads RHTRNLKLSSLGSRDSSTEAHRRAMKMVMS. Residues 239–259 traverse the membrane as a helical segment; it reads FLFLFIVHFFSLQVANWIFFM. At 260-265 the chain is on the extracellular side; it reads LWNNKY. Residues 266-286 traverse the membrane as a helical segment; that stretch reads IKFVMLALNAFPSCHSFILIL. At 287–299 the chain is on the cytoplasmic side; it reads GNSKLRQTAVRLL.

This sequence belongs to the G-protein coupled receptor T2R family.

Its subcellular location is the membrane. In terms of biological role, receptor that may play a role in the perception of bitterness and is gustducin-linked. May play a role in sensing the chemical composition of the gastrointestinal content. The activity of this receptor may stimulate alpha gustducin, mediate PLC-beta-2 activation and lead to the gating of TRPM5. The polypeptide is Taste receptor type 2 member 42 (TAS2R42) (Gorilla gorilla gorilla (Western lowland gorilla)).